We begin with the raw amino-acid sequence, 546 residues long: Smad protein daf-8 (546 aa).

The MH1 domain maps to 16 to 137 (AMAQKVLEET…YRWVELPTCQ (122 aa)). Disordered regions lie at residues 234–268 (LQQS…FIPN) and 292–317 (ENFS…PIEP). Over residues 292–302 (ENFSSENNGNR) the composition is skewed to polar residues. An MH2 domain is found at 349–546 (WLKLIYYEEG…APPRICSSRT (198 aa)).

Belongs to the dwarfin/SMAD family. As to quaternary structure, homodimer. Interacts with R-SMAD daf-14 and co-SMAD daf-3. Interacts with orphan nuclear receptor nhr-69. As to expression, expressed in the excretory cell and gonadal distal tip cells (DTCs).

The protein resides in the cytoplasm. It localises to the nucleus. Its function is as follows. Probably a receptor-regulated SMAD (R-SMAD) that is an intracellular signal transducer and transcriptional modulator activated by TGF-beta-like daf-7 signaling. Plays a role in TGF-beta-like daf-7 signaling in regulating entry into a developmentally arrested larval state known as dauer, in response to harsh environmental conditions; partially redundant with R-SMAD daf-14. Plays a role in inhibiting mitosis and promoting a switch to meiosis in the germ line, perhaps by down-regulating lag-2 transcription in the gonadal distal tip cells (DTCs). In cooperation with orphan nuclear receptor nhr-69 modulates the Insulin/IGF-1-like signaling (IIS) pathway, perhaps by regulating expression of the potassium channel exp-2, which in turn modulates the secretion of the insulin-like peptide daf-28. The polypeptide is Smad protein daf-8 (Caenorhabditis elegans).